The sequence spans 61 residues: Photosystem II reaction center protein K (61 aa).

A propeptide spanning residues 1–24 (MLNTFSLIGICLNSTLYSSSFFFG) is cleaved from the precursor. Residues 36–56 (IVDIMPVIPLFFFLLAFVWQA) traverse the membrane as a helical segment.

Belongs to the PsbK family. As to quaternary structure, PSII is composed of 1 copy each of membrane proteins PsbA, PsbB, PsbC, PsbD, PsbE, PsbF, PsbH, PsbI, PsbJ, PsbK, PsbL, PsbM, PsbT, PsbX, PsbY, PsbZ, Psb30/Ycf12, at least 3 peripheral proteins of the oxygen-evolving complex and a large number of cofactors. It forms dimeric complexes.

The protein resides in the plastid. It is found in the chloroplast thylakoid membrane. Its function is as follows. One of the components of the core complex of photosystem II (PSII). PSII is a light-driven water:plastoquinone oxidoreductase that uses light energy to abstract electrons from H(2)O, generating O(2) and a proton gradient subsequently used for ATP formation. It consists of a core antenna complex that captures photons, and an electron transfer chain that converts photonic excitation into a charge separation. The protein is Photosystem II reaction center protein K of Solanum bulbocastanum (Wild potato).